Consider the following 354-residue polypeptide: Sulfate/thiosulfate import ATP-binding protein CysA (354 aa).

Residues 3–237 enclose the ABC transporter domain; it reads IEVRGLSKRF…PATPFVYGFL (235 aa). 35 to 42 lines the ATP pocket; the sequence is GPSGCGKT.

It belongs to the ABC transporter superfamily. Sulfate/tungstate importer (TC 3.A.1.6) family. The complex is composed of two ATP-binding proteins (CysA), two transmembrane proteins (CysT and CysW) and a solute-binding protein (CysP).

It localises to the cell inner membrane. The catalysed reaction is sulfate(out) + ATP + H2O = sulfate(in) + ADP + phosphate + H(+). It carries out the reaction thiosulfate(out) + ATP + H2O = thiosulfate(in) + ADP + phosphate + H(+). In terms of biological role, part of the ABC transporter complex CysAWTP involved in sulfate/thiosulfate import. Responsible for energy coupling to the transport system. This Bordetella parapertussis (strain 12822 / ATCC BAA-587 / NCTC 13253) protein is Sulfate/thiosulfate import ATP-binding protein CysA.